The sequence spans 467 residues: Glutamate--tRNA ligase (467 aa).

A 'HIGH' region motif is present at residues 9–19 (PSPTGFLHIGG). The 'KMSKS' region signature appears at 250-254 (KLSKR). ATP is bound at residue K253.

This sequence belongs to the class-I aminoacyl-tRNA synthetase family. Glutamate--tRNA ligase type 1 subfamily. In terms of assembly, monomer.

It is found in the cytoplasm. It catalyses the reaction tRNA(Glu) + L-glutamate + ATP = L-glutamyl-tRNA(Glu) + AMP + diphosphate. Its function is as follows. Catalyzes the attachment of glutamate to tRNA(Glu) in a two-step reaction: glutamate is first activated by ATP to form Glu-AMP and then transferred to the acceptor end of tRNA(Glu). This Mesomycoplasma hyopneumoniae (strain J / ATCC 25934 / NCTC 10110) (Mycoplasma hyopneumoniae) protein is Glutamate--tRNA ligase.